The following is a 288-amino-acid chain: Thymidylate synthase (288 aa).

Residue arginine 21 participates in dUMP binding. Asparagine 51 lines the (6R)-5,10-methylene-5,6,7,8-tetrahydrofolate pocket. 150–151 (RR) contributes to the dUMP binding site. Cysteine 170 (nucleophile) is an active-site residue. DUMP contacts are provided by residues 190–193 (RSGD), asparagine 201, and 231–233 (HIY). A (6R)-5,10-methylene-5,6,7,8-tetrahydrofolate-binding site is contributed by aspartate 193. Residue alanine 287 coordinates (6R)-5,10-methylene-5,6,7,8-tetrahydrofolate.

The protein belongs to the thymidylate synthase family. Bacterial-type ThyA subfamily. In terms of assembly, homodimer.

It localises to the cytoplasm. It catalyses the reaction dUMP + (6R)-5,10-methylene-5,6,7,8-tetrahydrofolate = 7,8-dihydrofolate + dTMP. The protein operates within pyrimidine metabolism; dTTP biosynthesis. Functionally, catalyzes the reductive methylation of 2'-deoxyuridine-5'-monophosphate (dUMP) to 2'-deoxythymidine-5'-monophosphate (dTMP) while utilizing 5,10-methylenetetrahydrofolate (mTHF) as the methyl donor and reductant in the reaction, yielding dihydrofolate (DHF) as a by-product. This enzymatic reaction provides an intracellular de novo source of dTMP, an essential precursor for DNA biosynthesis. This chain is Thymidylate synthase, found in Aster yellows witches'-broom phytoplasma (strain AYWB).